A 565-amino-acid polypeptide reads, in one-letter code: Atlastin-2 (565 aa).

At 1–458 the chain is on the cytoplasmic side; sequence MVLKKGVKFF…NIFYAARTPA (458 aa). The GB1/RHD3-type G domain maps to 73 to 318; the sequence is DLNIVVVSVA…LVPLLLAPEN (246 aa). The GDP site is built by Arg86, Lys87, Gly88, Lys89, Ser90, Phe91, Gln157, Arg226, and Asp227. GTP-binding residues include Arg86, Lys87, Gly88, Lys89, Ser90, and Phe91. Ser90 serves as a coordination point for Mg(2+). GTP-binding residues include Arg226 and Asp227. Residues 238–266 adopt a coiled-coil conformation; it reads LEGGKQFLEKRLQVKKNQHEELQNVRKHI. Residue Lys252 is modified to N6-methyllysine. GDP contacts are provided by Val285 and Asn288. Val285 serves as a coordination point for GTP. A 3HB (three-helix bundle) domain region spans residues 356 to 447; sequence MLQATAEANN…YANFIKHNDG (92 aa). Residues 448–456 are linker; sequence KNIFYAART. A helical membrane pass occupies residues 459–479; that stretch reads TLFAVMFAMYIISGLTGFIGL. The Lumenal portion of the chain corresponds to 480–481; the sequence is NS. Residues 482-502 traverse the membrane as a helical segment; it reads IAVLCNLVMGLALTFLCTWAY. At 503 to 565 the chain is on the cytoplasmic side; sequence VKYSGEFREI…VSHHARLKTD (63 aa). The tract at residues 529-565 is autoinhibitory domain; the sequence is KPLGDNLMEENIRQSVTNSIKAGLTDQVSHHARLKTD.

The protein belongs to the TRAFAC class dynamin-like GTPase superfamily. GB1/RHD3 GTPase family. GB1 subfamily. Monomeric and homodimeric. The homodimer, transiently formed by two molecules on opposing membranes, is the active form mediating ER membrane fusion. Interacts with REEP5 and RTN3; these proteins are involved in endoplasmic reticulum tubular network organization. Interacts with ZFYVE27; both proteins are involved in endoplasmic reticulum tubular network organization.

The protein resides in the endoplasmic reticulum membrane. The enzyme catalyses GTP + H2O = GDP + phosphate + H(+). In terms of biological role, atlastin-2 (ATL2) is a membrane-anchored GTPase that mediates the GTP-dependent fusion of endoplasmic reticulum (ER) membranes, maintaining the continuous ER network. It facilitates the formation of three-way junctions where ER tubules intersect. Two atlastin-2 on neighboring ER tubules bind GTP and form loose homodimers through the GB1/RHD3-type G domains and 3HB regions. Upon GTP hydrolysis, the 3HB regions tighten, pulling the membranes together to drive their fusion. After fusion, the homodimer disassembles upon release of inorganic phosphate (Pi). Subsequently, GDP dissociates, resetting the monomers to a conformation ready for a new fusion cycle. This chain is Atlastin-2, found in Macaca fascicularis (Crab-eating macaque).